The sequence spans 359 residues: Phosphoribosylformylglycinamidine cyclo-ligase (359 aa).

This sequence belongs to the AIR synthase family.

The protein resides in the cytoplasm. It carries out the reaction 2-formamido-N(1)-(5-O-phospho-beta-D-ribosyl)acetamidine + ATP = 5-amino-1-(5-phospho-beta-D-ribosyl)imidazole + ADP + phosphate + H(+). It functions in the pathway purine metabolism; IMP biosynthesis via de novo pathway; 5-amino-1-(5-phospho-D-ribosyl)imidazole from N(2)-formyl-N(1)-(5-phospho-D-ribosyl)glycinamide: step 2/2. The polypeptide is Phosphoribosylformylglycinamidine cyclo-ligase (Brucella canis (strain ATCC 23365 / NCTC 10854 / RM-666)).